The primary structure comprises 377 residues: Succinyl-diaminopimelate desuccinylase (377 aa).

Histidine 66 serves as a coordination point for Zn(2+). Aspartate 68 is a catalytic residue. Aspartate 99 provides a ligand contact to Zn(2+). Glutamate 133 serves as the catalytic Proton acceptor. Positions 134, 162, and 348 each coordinate Zn(2+).

Belongs to the peptidase M20A family. DapE subfamily. In terms of assembly, homodimer. Zn(2+) serves as cofactor. Requires Co(2+) as cofactor.

It carries out the reaction N-succinyl-(2S,6S)-2,6-diaminopimelate + H2O = (2S,6S)-2,6-diaminopimelate + succinate. It functions in the pathway amino-acid biosynthesis; L-lysine biosynthesis via DAP pathway; LL-2,6-diaminopimelate from (S)-tetrahydrodipicolinate (succinylase route): step 3/3. Functionally, catalyzes the hydrolysis of N-succinyl-L,L-diaminopimelic acid (SDAP), forming succinate and LL-2,6-diaminopimelate (DAP), an intermediate involved in the bacterial biosynthesis of lysine and meso-diaminopimelic acid, an essential component of bacterial cell walls. The sequence is that of Succinyl-diaminopimelate desuccinylase from Bordetella avium (strain 197N).